Here is a 214-residue protein sequence, read N- to C-terminus: Pyridoxine/pyridoxamine 5'-phosphate oxidase (214 aa).

Substrate is bound by residues 8-11 (RLSY) and Arg-66. FMN-binding positions include 61–66 (RTVLLR), 76–77 (FT), Lys-83, and Gln-105. 3 residues coordinate substrate: Tyr-123, Arg-127, and Ser-131. The tract at residues 126-146 (SRPRESQLAAHASDPQSAPVS) is disordered. FMN-binding positions include 141–142 (QS) and Trp-187. 193–195 (RMH) is a binding site for substrate. Residue Arg-197 coordinates FMN.

Belongs to the pyridoxamine 5'-phosphate oxidase family. In terms of assembly, homodimer. Requires FMN as cofactor.

It carries out the reaction pyridoxamine 5'-phosphate + O2 + H2O = pyridoxal 5'-phosphate + H2O2 + NH4(+). The catalysed reaction is pyridoxine 5'-phosphate + O2 = pyridoxal 5'-phosphate + H2O2. Its pathway is cofactor metabolism; pyridoxal 5'-phosphate salvage; pyridoxal 5'-phosphate from pyridoxamine 5'-phosphate: step 1/1. The protein operates within cofactor metabolism; pyridoxal 5'-phosphate salvage; pyridoxal 5'-phosphate from pyridoxine 5'-phosphate: step 1/1. Its function is as follows. Catalyzes the oxidation of either pyridoxine 5'-phosphate (PNP) or pyridoxamine 5'-phosphate (PMP) into pyridoxal 5'-phosphate (PLP). This Deinococcus deserti (strain DSM 17065 / CIP 109153 / LMG 22923 / VCD115) protein is Pyridoxine/pyridoxamine 5'-phosphate oxidase.